Here is a 363-residue protein sequence, read N- to C-terminus: Ribosomal RNA large subunit methyltransferase M (363 aa).

Residues Ser-194, 227 to 230, Asp-246, Asp-266, and Asp-284 contribute to the S-adenosyl-L-methionine site; that span reads CPGG. The active-site Proton acceptor is Lys-313.

Belongs to the class I-like SAM-binding methyltransferase superfamily. RNA methyltransferase RlmE family. RlmM subfamily. As to quaternary structure, monomer.

The protein localises to the cytoplasm. It carries out the reaction cytidine(2498) in 23S rRNA + S-adenosyl-L-methionine = 2'-O-methylcytidine(2498) in 23S rRNA + S-adenosyl-L-homocysteine + H(+). In terms of biological role, catalyzes the 2'-O-methylation at nucleotide C2498 in 23S rRNA. The chain is Ribosomal RNA large subunit methyltransferase M from Haemophilus influenzae (strain PittGG).